The chain runs to 134 residues: Interleukin-5 (134 aa).

The signal sequence occupies residues methionine 1 to alanine 19. O-linked (GalNAc...) threonine glycosylation is present at threonine 22. N-linked (GlcNAc...) asparagine glycosylation is found at asparagine 47 and asparagine 90.

It belongs to the IL-5 family. As to quaternary structure, homodimer; disulfide-linked. Interacts with IL5RA. Interacts with CSF2RB.

It is found in the secreted. Homodimeric cytokine expressed predominantly by T-lymphocytes and NK cells that plays an important role in the survival, differentiation, and chemotaxis of eosinophils. Also acts on activated and resting B-cells to induce immunoglobulin production, growth, and differentiation. Mechanistically, exerts its biological effects through a receptor composed of IL5RA subunit and the cytokine receptor common subunit beta/CSF2RB. Binding to the receptor leads to activation of various kinases including LYN, SYK and JAK2 and thereby propagates signals through the RAS-MAPK and JAK-STAT5 pathways respectively. This is Interleukin-5 (IL5) from Cercocebus atys (Sooty mangabey).